The chain runs to 114 residues: Cytochrome c oxidase subunit 4B (114 aa).

3 helical membrane passes run 29-49 (QIVV…AVAT), 56-76 (FAIP…LFFF), and 89-109 (AFMI…MLLL).

Belongs to the cytochrome c oxidase bacterial subunit 4 family.

It localises to the cell membrane. It carries out the reaction 4 Fe(II)-[cytochrome c] + O2 + 8 H(+)(in) = 4 Fe(III)-[cytochrome c] + 2 H2O + 4 H(+)(out). The sequence is that of Cytochrome c oxidase subunit 4B (ctaF) from Alkalihalophilus pseudofirmus (strain ATCC BAA-2126 / JCM 17055 / OF4) (Bacillus pseudofirmus).